Here is a 466-residue protein sequence, read N- to C-terminus: F-box/LRR-repeat protein fbxl-1 (466 aa).

Positions Ser54 to Val100 constitute an F-box domain. LRR repeat units follow at residues Gly122 to Arg147, Cys148 to Tyr173, Cys174 to Gly199, Cys200 to Asn225, Cys226 to His251, Met252 to Gly277, Ala278 to His303, Ser304 to Gly329, Cys330 to Asn355, Cys356 to Lys381, and Cys408 to His433.

As to quaternary structure, component of the SCF (SKP1-CUL1-F-box protein)-type E3 ubiquitin ligase complex. In terms of tissue distribution, expressed in neuroglial cells such as the socket cell and sheath cell, neurosecretory motor neurons and regions around the pharynx and anus.

The protein resides in the perikaryon. Its subcellular location is the cell projection. It localises to the dendrite. The protein localises to the cilium. It is found in the axon. Substrate-recognition component of the SCF (SKP1-CUL1-F-box protein)-type E3 ubiquitin ligase complex. Plays a role in regulating the entry into the dauer state. In hermaphrodites, may play a role in modulating the rate of defecation. The chain is F-box/LRR-repeat protein fbxl-1 from Caenorhabditis elegans.